A 492-amino-acid polypeptide reads, in one-letter code: Probable G-protein coupled receptor Mth-like 8 (492 aa).

The first 21 residues, 1 to 21 (MAQFCILGVLLILSGTHCSWG), serve as a signal peptide directing secretion. At 22-218 (FHEETHYPCA…FVLGVREWTY (197 aa)) the chain is on the extracellular side. 4 cysteine pairs are disulfide-bonded: cysteine 30–cysteine 82, cysteine 84–cysteine 89, cysteine 93–cysteine 184, and cysteine 94–cysteine 107. N-linked (GlcNAc...) asparagine glycans are attached at residues asparagine 37 and asparagine 51. Asparagine 129, asparagine 169, and asparagine 192 each carry an N-linked (GlcNAc...) asparagine glycan. Residues 219-239 (AICLLIAILSMFIVLMVYLMC) traverse the membrane as a helical segment. At 240–245 (SEMRNS) the chain is on the cytoplasmic side. The chain crosses the membrane as a helical span at residues 246–266 (FYGVAIKAYAICMILGYALLA). Residues 267 to 282 (YLTLHNPANLSNAACR) are Extracellular-facing. N-linked (GlcNAc...) asparagine glycosylation is present at asparagine 275. Residues 283–303 (ILPSLALMNLVLSFYILSFIA) traverse the membrane as a helical segment. The Cytoplasmic portion of the chain corresponds to 304–317 (FKLYLSFYGVVFTK). A helical transmembrane segment spans residues 318-338 (LMFWLIFTPIVLVAVGWSFFV). The Extracellular segment spans residues 339–362 (GFSYYGSRLIFGGDTCWFDPRNWS). Asparagine 360 is a glycosylation site (N-linked (GlcNAc...) asparagine). A helical transmembrane segment spans residues 363-383 (VMIYFYAPVFVACAISGFFYV). Over 384–411 (LSQIYIRDQPDIETEKSFESIEKNRFKS) the chain is Cytoplasmic. A helical membrane pass occupies residues 412–432 (FWKYFGYTAVVWVVCICSFAF). At 433–441 (NYYWENRSH) the chain is on the extracellular side. Residue asparagine 438 is glycosylated (N-linked (GlcNAc...) asparagine). A helical transmembrane segment spans residues 442–462 (LNYAVSFCMAFHGFAALYALI). At 463–492 (GKNQQIQNFLRRIDNGEDTCENSVPLSSFG) the chain is on the cytoplasmic side.

The protein belongs to the G-protein coupled receptor 2 family. Mth subfamily.

The protein resides in the cell membrane. The polypeptide is Probable G-protein coupled receptor Mth-like 8 (mthl8) (Drosophila melanogaster (Fruit fly)).